Reading from the N-terminus, the 122-residue chain is Flagellar protein FliT (122 aa).

The segment at 1–50 (MTSTVEFINRWQRIALLSQSLLELAQRGEWELLLQQEVSYLQSIETVMEK) is required for homodimerization. The interval 60–98 (IQDMVAGYIKQTLDNEQRLKGLLQQRLDELSGLIGQSTR) is fliD binding.

The protein belongs to the FliT family. As to quaternary structure, homodimer. Interacts with FliD and FlhC.

It localises to the cytoplasm. The protein resides in the cytosol. Its function is as follows. Dual-function protein that regulates the transcription of class 2 flagellar operons and that also acts as an export chaperone for the filament-capping protein FliD. As a transcriptional regulator, acts as an anti-FlhDC factor; it directly binds FlhC, thus inhibiting the binding of the FlhC/FlhD complex to class 2 promoters, resulting in decreased expression of class 2 flagellar operons. As a chaperone, effects FliD transition to the membrane by preventing its premature polymerization, and by directing it to the export apparatus. The chain is Flagellar protein FliT from Salmonella arizonae (strain ATCC BAA-731 / CDC346-86 / RSK2980).